Here is a 338-residue protein sequence, read N- to C-terminus: MDIRQDYPLSKRNTFGIAARTDWWIDYTCDADIDRLVKDEFFQDCRVQTIGEGSNLLFLANFHGILLHSEVKGITELHKDQDSILLRVGSGMVWDDFVAYAVENNYYGIENLSLIPGQVGASAVQNIGAYGVEVSQLIEAVHARHYRTGESRVFRNEDCRYAYRYSIFKEPDYAEWTIMYVDYRLRLKPSFSLEYKALAKVLEEERITPTLQSIRDTVIRIRNSKLPDPATIGNAGSFFVNPVVSAEKFNTLQTEYPSIPSYPQPDGSVKVPAGWLIEQCGYKGHRSGAVGVYEHQALVLVNYGGATGTQVGALAEEIIGNVRQKFGITLHPEVKYIL.

Residues 17–188 form the FAD-binding PCMH-type domain; it reads IAARTDWWID…MYVDYRLRLK (172 aa). The active site involves Arg-164. The active-site Proton donor is the Ser-237. The active site involves Glu-333.

It belongs to the MurB family. The cofactor is FAD.

Its subcellular location is the cytoplasm. The catalysed reaction is UDP-N-acetyl-alpha-D-muramate + NADP(+) = UDP-N-acetyl-3-O-(1-carboxyvinyl)-alpha-D-glucosamine + NADPH + H(+). Its pathway is cell wall biogenesis; peptidoglycan biosynthesis. In terms of biological role, cell wall formation. The polypeptide is UDP-N-acetylenolpyruvoylglucosamine reductase (Porphyromonas gingivalis (strain ATCC BAA-308 / W83)).